The chain runs to 630 residues: Ankyrin repeat protein OPG025 (630 aa).

6 ANK repeats span residues 36–69 (DGET…YKNI), 70–100 (NDFD…EINS), 103–134 (NGIN…PTCS), 174–210 (MGKT…EMCH), 338–367 (KHIN…VVVN), and 408–437 (HGRS…DINI).

Belongs to the orthopoxvirus OPG025 family. In terms of assembly, interacts with components of host SCF complex CUL1 and SKP1 and components of the cullin deneddylation/COP9 signalosome complex subunits COPS7A and COPS7B.

In terms of biological role, plays a role in the inhibition of host immune repsonse by counteracting the action of interferons on early events in the viral replication cycle. This chain is Ankyrin repeat protein OPG025 (OPG025), found in Monkeypox virus.